Reading from the N-terminus, the 190-residue chain is GMP synthase [glutamine-hydrolyzing] subunit A (190 aa).

A Glutamine amidotransferase type-1 domain is found at 2–189; it reads TILVINNKGQ…YEICKKRCNN (188 aa). The active-site Nucleophile is the Cys-76. Residues His-163 and Glu-165 contribute to the active site.

Heterodimer composed of a glutamine amidotransferase subunit (A) and a GMP-binding subunit (B).

The enzyme catalyses XMP + L-glutamine + ATP + H2O = GMP + L-glutamate + AMP + diphosphate + 2 H(+). The protein operates within purine metabolism; GMP biosynthesis; GMP from XMP (L-Gln route): step 1/1. In terms of biological role, catalyzes the synthesis of GMP from XMP. This Methanobrevibacter smithii (strain ATCC 35061 / DSM 861 / OCM 144 / PS) protein is GMP synthase [glutamine-hydrolyzing] subunit A.